A 173-amino-acid polypeptide reads, in one-letter code: NADH-ubiquinone oxidoreductase chain 6 (173 aa).

The next 5 membrane-spanning stretches (helical) occupy residues 1–21, 27–47, 48–68, 87–107, and 139–159; these read MTYF…AVAS, YGVV…LSLG, ASFV…VVFV, VIGY…IGGF, and WGAG…FVVL.

Belongs to the complex I subunit 6 family.

The protein localises to the mitochondrion membrane. The enzyme catalyses a ubiquinone + NADH + 5 H(+)(in) = a ubiquinol + NAD(+) + 4 H(+)(out). Its function is as follows. Core subunit of the mitochondrial membrane respiratory chain NADH dehydrogenase (Complex I) that is believed to belong to the minimal assembly required for catalysis. Complex I functions in the transfer of electrons from NADH to the respiratory chain. The immediate electron acceptor for the enzyme is believed to be ubiquinone. This Brachyramphus brevirostris (Kittlitz's murrelet) protein is NADH-ubiquinone oxidoreductase chain 6 (MT-ND6).